The chain runs to 338 residues: 2,3-dihydroxybenzoate decarboxylase (338 aa).

C251 is an active-site residue.

Belongs to the metallo-dependent hydrolases superfamily. In terms of assembly, homotetramer.

It carries out the reaction 2,3-dihydroxybenzoate + H(+) = catechol + CO2. It functions in the pathway aromatic compound metabolism; benzoate degradation via hydroxylation. Has an absolute substrate specificity for 2,3-DHBA. The polypeptide is 2,3-dihydroxybenzoate decarboxylase (Aspergillus oryzae (strain ATCC 42149 / RIB 40) (Yellow koji mold)).